Reading from the N-terminus, the 408-residue chain is MHATEDETTTIPRFPFQRASAFEPPAEFARLRANEPISQVELFDGSLAWLVVKHEDVCRVATDERLSKERTRLGFPELSAGGKAAAKNKPTFVDMDAPAHMNQRSMVEPFFTEDHVENLRPYIKETVQGLLNDMVANGCEEPVDLIEKFALPVPSYIIYTILGVPFEDLEYLTEQNAIRSNGSGTAQEAAAANQQLLKYLAKLVDQRLQEPKDDLIGRLVDQQLVPGHIEKSDAVQIAFLLLVAGNATMVNMIALGVVTLMQNPSQLEELKADPTLVPGFVEELCRYHTGSSMAMKRVAKEDMELGGKLIRAGEGIIASNQSANRDEDVFPNPDVFDMHRDFDSRDGLGFGFGPHRCIAELLAKAELEIVFETLFATLPDLRVSIPLDEIECTPRHKDVGIVRLPVKW.

C357 contacts heme.

It belongs to the cytochrome P450 family. It depends on heme as a cofactor.

This Fusarium lichenicola (Cylindrocarpon lichenicola) protein is Cytochrome P450 55A3 (CYP55A3).